The following is a 326-amino-acid chain: Biotin synthase (326 aa).

The Radical SAM core domain occupies 51 to 278 (NEVQRSTLLS…TSYVRLSAGR (228 aa)). Positions 66, 70, and 73 each coordinate [4Fe-4S] cluster. [2Fe-2S] cluster contacts are provided by cysteine 110, cysteine 141, cysteine 201, and arginine 273.

Belongs to the radical SAM superfamily. Biotin synthase family. As to quaternary structure, homodimer. It depends on [4Fe-4S] cluster as a cofactor. The cofactor is [2Fe-2S] cluster.

It catalyses the reaction (4R,5S)-dethiobiotin + (sulfur carrier)-SH + 2 reduced [2Fe-2S]-[ferredoxin] + 2 S-adenosyl-L-methionine = (sulfur carrier)-H + biotin + 2 5'-deoxyadenosine + 2 L-methionine + 2 oxidized [2Fe-2S]-[ferredoxin]. It participates in cofactor biosynthesis; biotin biosynthesis; biotin from 7,8-diaminononanoate: step 2/2. Catalyzes the conversion of dethiobiotin (DTB) to biotin by the insertion of a sulfur atom into dethiobiotin via a radical-based mechanism. The sequence is that of Biotin synthase from Azoarcus sp. (strain BH72).